A 126-amino-acid polypeptide reads, in one-letter code: Aspartate 1-decarboxylase (126 aa).

Catalysis depends on Ser25, which acts as the Schiff-base intermediate with substrate; via pyruvic acid. Ser25 is modified (pyruvic acid (Ser)). Thr57 is a substrate binding site. The Proton donor role is filled by Tyr58. Substrate is bound at residue 72–74 (GAT).

It belongs to the PanD family. In terms of assembly, heterooctamer of four alpha and four beta subunits. The cofactor is pyruvate. In terms of processing, is synthesized initially as an inactive proenzyme, which is activated by self-cleavage at a specific serine bond to produce a beta-subunit with a hydroxyl group at its C-terminus and an alpha-subunit with a pyruvoyl group at its N-terminus.

The protein resides in the cytoplasm. It carries out the reaction L-aspartate + H(+) = beta-alanine + CO2. It functions in the pathway cofactor biosynthesis; (R)-pantothenate biosynthesis; beta-alanine from L-aspartate: step 1/1. Functionally, catalyzes the pyruvoyl-dependent decarboxylation of aspartate to produce beta-alanine. The polypeptide is Aspartate 1-decarboxylase (Campylobacter jejuni subsp. doylei (strain ATCC BAA-1458 / RM4099 / 269.97)).